Reading from the N-terminus, the 431-residue chain is Forkhead box protein P3 (431 aa).

Residues 1–68 form a disordered region; that stretch reads MPNPRPGKPS…SSLNPMPPSQ (68 aa). The segment covering 10–25 has biased composition (low complexity); sequence SAPSLALGPSPGASPS. Position 19 is a phosphoserine; by CDK2 (S19). Position 31 is an N6-acetyllysine (K31). The short motif at 68–76 is the Nuclear export signal element; it reads QLQLPTLPL. The LXXLL motif motif lies at 92-96; the sequence is LQALL. Positions 106 to 190 are essential for transcriptional repressor activity and for interaction with KAT5 and HDAC7; sequence LSTVDAHART…STLSAMPQSS (85 aa). The interval 149–199 is interaction with IKZF4; the sequence is LPPGINVASLEWVSREPALLCTFPNPGAPRKDSTLSAMPQSSYPLLANGVC. The C2H2-type zinc-finger motif lies at 197 to 222; the sequence is GVCKWPGCEKVFEEPEDFLKHCQADH. The short motif at 239-248 is the Nuclear export signal element; the sequence is VQSLEQQLVL. Residues 239–260 are leucine-zipper; the sequence is VQSLEQQLVLEKEKLSAMQAHL. Residues K250 and K252 each participate in a glycyl lysine isopeptide (Lys-Gly) (interchain with G-Cter in ubiquitin) cross-link. Residues K263 and K268 each carry the N6-acetyllysine; alternate modification. Glycyl lysine isopeptide (Lys-Gly) (interchain with G-Cter in ubiquitin); alternate cross-links involve residues K263 and K268. Residues 278-336 form an interaction with RUNX1 region; the sequence is GSCCIVAAGSQGSAVPAWSGPREAPDSLFAVRRHLWGSHGNSTFPEFLHNMDYFKFHNM. A DNA-binding region (fork-head) is located at residues 337–423; that stretch reads RPPFTYATLI…RKKRSQRPSR (87 aa). Residue K393 forms a Glycyl lysine isopeptide (Lys-Gly) (interchain with G-Cter in ubiquitin) linkage. Residues 414–417 carry the Nuclear localization signal motif; it reads RKKR. S418 is modified (phosphoserine). The propeptide occupies 418–431; sequence SQRPSRCSNPTPGP.

In terms of assembly, homodimer. Dimerization is essential for its transcriptional regulator activity. Interacts with IKZF3. Interacts (via LXXLL motif) with RORA (via AF-2 motif). Interacts with HDAC9 in the absence of T-cell stimulation. Interacts with PPP1CA, PPP1CB, PPP1CG, KAT5, HDAC7, HSPA8, USP7, STUB1, HSPA1A/B, RUNX1, RUNX2, RUNX3, RELA, NFATC2, IKFZ4 and RORC. Post-translationally, phosphorylation at Ser-418 regulates its transcriptional repressor activity and consequently, regulatory T-cells (Treg) suppressive function. Phosphorylation by CDK2 negatively regulates its transcriptional activity and protein stability. Polyubiquitinated, leading to its proteasomal degradation in regulatory T-cells (Treg) which is mediated by STUB1 in a HSPA1A/B-dependent manner. Deubiquitinated by USP7 and USP44 leading to increase in protein stability. In terms of processing, acetylation on lysine residues stabilizes FOXP3 and promotes differentiation of T-cells into induced regulatory T-cells (iTregs) associated with suppressive functions. Acetylation is mediated by a coordinated action of KAT5 and EP300/p300 acetyltransferases: EP300/p300 is required to enhance KAT5 autoacetylation, promoting acetylation of FOXP3 by KAT5. Deacetylated by SIRT1. Post-translationally, undergoes proteolytic cleavage in activated regulatory T-cells (Treg), and can be cleaved at either the N- or C-terminal site, or at both sites.

It localises to the nucleus. The protein localises to the cytoplasm. In terms of biological role, transcriptional regulator which is crucial for the development and inhibitory function of regulatory T-cells (Treg). Plays an essential role in maintaining homeostasis of the immune system by allowing the acquisition of full suppressive function and stability of the Treg lineage, and by directly modulating the expansion and function of conventional T-cells. Can act either as a transcriptional repressor or a transcriptional activator depending on its interactions with other transcription factors, histone acetylases and deacetylases. The suppressive activity of Treg involves the coordinate activation of many genes, including CTLA4 and TNFRSF18 by FOXP3 along with repression of genes encoding cytokines such as interleukin-2 (IL2) and interferon-gamma (IFNG). Inhibits cytokine production and T-cell effector function by repressing the activity of two key transcription factors, RELA and NFATC2. Mediates transcriptional repression of IL2 via its association with histone acetylase KAT5 and histone deacetylase HDAC7. Can activate the expression of TNFRSF18, IL2RA and CTLA4 and repress the expression of IL2 and IFNG via its association with transcription factor RUNX1. Inhibits the differentiation of IL17 producing helper T-cells (Th17) by antagonizing RORC function, leading to down-regulation of IL17 expression, favoring Treg development. Inhibits the transcriptional activator activity of RORA. Can repress the expression of IL2 and IFNG via its association with transcription factor IKZF4. The chain is Forkhead box protein P3 (FOXP3) from Macaca fascicularis (Crab-eating macaque).